We begin with the raw amino-acid sequence, 216 residues long: Probable transaldolase (216 aa).

The active-site Schiff-base intermediate with substrate is Lys-83.

The protein belongs to the transaldolase family. Type 3B subfamily.

The protein localises to the cytoplasm. The enzyme catalyses D-sedoheptulose 7-phosphate + D-glyceraldehyde 3-phosphate = D-erythrose 4-phosphate + beta-D-fructose 6-phosphate. Its pathway is carbohydrate degradation; pentose phosphate pathway; D-glyceraldehyde 3-phosphate and beta-D-fructose 6-phosphate from D-ribose 5-phosphate and D-xylulose 5-phosphate (non-oxidative stage): step 2/3. In terms of biological role, transaldolase is important for the balance of metabolites in the pentose-phosphate pathway. The protein is Probable transaldolase of Sphingopyxis alaskensis (strain DSM 13593 / LMG 18877 / RB2256) (Sphingomonas alaskensis).